Here is a 600-residue protein sequence, read N- to C-terminus: Aspartate--tRNA(Asp/Asn) ligase (600 aa).

Glutamate 181 is an L-aspartate binding site. The interval 205 to 208 (QQFK) is aspartate. Arginine 227 is an L-aspartate binding site. ATP-binding positions include 227 to 229 (RDE) and glutamine 236. L-aspartate is bound at residue histidine 455. Residue glutamate 489 coordinates ATP. Arginine 496 lines the L-aspartate pocket. Residue 541 to 544 (GIDR) coordinates ATP.

This sequence belongs to the class-II aminoacyl-tRNA synthetase family. Type 1 subfamily. In terms of assembly, homodimer.

The protein localises to the cytoplasm. It catalyses the reaction tRNA(Asx) + L-aspartate + ATP = L-aspartyl-tRNA(Asx) + AMP + diphosphate. In terms of biological role, aspartyl-tRNA synthetase with relaxed tRNA specificity since it is able to aspartylate not only its cognate tRNA(Asp) but also tRNA(Asn). Reaction proceeds in two steps: L-aspartate is first activated by ATP to form Asp-AMP and then transferred to the acceptor end of tRNA(Asp/Asn). This is Aspartate--tRNA(Asp/Asn) ligase from Rubrobacter xylanophilus (strain DSM 9941 / JCM 11954 / NBRC 16129 / PRD-1).